Here is a 567-residue protein sequence, read N- to C-terminus: Sensor histidine kinase MtrB (567 aa).

Residues 1 to 15 show a composition bias toward basic residues; it reads MIFGSRRRIRGRRGR. A disordered region spans residues 1 to 20; it reads MIFGSRRRIRGRRGRSGPMT. The next 2 helical transmembrane spans lie at 42–62 and 213–233; these read VVAL…FVLT and GTMA…ALLV. The region spanning 235–287 is the HAMP domain; sequence RQVVVPVRSASRIAERFAEGHLSERMPVRGEDDMARLAVSFNDMAESLSRQIA. The 218-residue stretch at 302-519 folds into the Histidine kinase domain; that stretch reads DVSHELRTPL…CFRLTLPLVR (218 aa). H305 is modified (phosphohistidine; by autocatalysis). The interval 526 to 567 is disordered; it reads SPLPMKPIPQPVLQPVAQPNPQPMPPEYKERQRPREHAEWSG. Residues 529 to 551 show a composition bias toward pro residues; sequence PMKPIPQPVLQPVAQPNPQPMPP. A compositionally biased stretch (basic and acidic residues) spans 552–567; sequence EYKERQRPREHAEWSG.

Its subcellular location is the cell membrane. It carries out the reaction ATP + protein L-histidine = ADP + protein N-phospho-L-histidine.. In terms of biological role, member of the two-component regulatory system MtrA/MtrB. Seems to function as a membrane-associated protein kinase that phosphorylates MtrA in response to environmental signals. In Mycobacterium bovis (strain ATCC BAA-935 / AF2122/97), this protein is Sensor histidine kinase MtrB (mtrB).